The sequence spans 345 residues: Tetraacyldisaccharide 4'-kinase (345 aa).

51–58 serves as a coordination point for ATP; that stretch reads HVGGAGKT.

It belongs to the LpxK family.

The catalysed reaction is a lipid A disaccharide + ATP = a lipid IVA + ADP + H(+). The protein operates within glycolipid biosynthesis; lipid IV(A) biosynthesis; lipid IV(A) from (3R)-3-hydroxytetradecanoyl-[acyl-carrier-protein] and UDP-N-acetyl-alpha-D-glucosamine: step 6/6. Functionally, transfers the gamma-phosphate of ATP to the 4'-position of a tetraacyldisaccharide 1-phosphate intermediate (termed DS-1-P) to form tetraacyldisaccharide 1,4'-bis-phosphate (lipid IVA). This chain is Tetraacyldisaccharide 4'-kinase, found in Bradyrhizobium sp. (strain BTAi1 / ATCC BAA-1182).